We begin with the raw amino-acid sequence, 184 residues long: ATP synthase subunit delta (184 aa).

The protein belongs to the ATPase delta chain family. F-type ATPases have 2 components, F(1) - the catalytic core - and F(0) - the membrane proton channel. F(1) has five subunits: alpha(3), beta(3), gamma(1), delta(1), epsilon(1). F(0) has three main subunits: a(1), b(2) and c(10-14). The alpha and beta chains form an alternating ring which encloses part of the gamma chain. F(1) is attached to F(0) by a central stalk formed by the gamma and epsilon chains, while a peripheral stalk is formed by the delta and b chains.

It is found in the cell inner membrane. F(1)F(0) ATP synthase produces ATP from ADP in the presence of a proton or sodium gradient. F-type ATPases consist of two structural domains, F(1) containing the extramembraneous catalytic core and F(0) containing the membrane proton channel, linked together by a central stalk and a peripheral stalk. During catalysis, ATP synthesis in the catalytic domain of F(1) is coupled via a rotary mechanism of the central stalk subunits to proton translocation. In terms of biological role, this protein is part of the stalk that links CF(0) to CF(1). It either transmits conformational changes from CF(0) to CF(1) or is implicated in proton conduction. This chain is ATP synthase subunit delta, found in Dichelobacter nodosus (strain VCS1703A).